Reading from the N-terminus, the 672-residue chain is Threonine--tRNA ligase (672 aa).

The TGS domain maps to methionine 1 to threonine 64. Residues aspartate 257 to proline 566 are catalytic. The Zn(2+) site is built by cysteine 362, histidine 413, and histidine 543.

This sequence belongs to the class-II aminoacyl-tRNA synthetase family. As to quaternary structure, homodimer. The cofactor is Zn(2+).

The protein localises to the cytoplasm. It catalyses the reaction tRNA(Thr) + L-threonine + ATP = L-threonyl-tRNA(Thr) + AMP + diphosphate + H(+). Catalyzes the attachment of threonine to tRNA(Thr) in a two-step reaction: L-threonine is first activated by ATP to form Thr-AMP and then transferred to the acceptor end of tRNA(Thr). Also edits incorrectly charged L-seryl-tRNA(Thr). The protein is Threonine--tRNA ligase of Erythrobacter litoralis (strain HTCC2594).